The sequence spans 393 residues: Chorismate synthase (393 aa).

Residues R40 and R46 each contribute to the NADP(+) site. FMN contacts are provided by residues 135–137 (RAS), 257–258 (QA), G301, 316–320 (KPIAT), and R342. The interval 280–306 (DEIDVGPDGIRRRSNRAGGVEGGMSTG) is disordered.

This sequence belongs to the chorismate synthase family. As to quaternary structure, homotetramer. The cofactor is FMNH2.

The enzyme catalyses 5-O-(1-carboxyvinyl)-3-phosphoshikimate = chorismate + phosphate. It functions in the pathway metabolic intermediate biosynthesis; chorismate biosynthesis; chorismate from D-erythrose 4-phosphate and phosphoenolpyruvate: step 7/7. Functionally, catalyzes the anti-1,4-elimination of the C-3 phosphate and the C-6 proR hydrogen from 5-enolpyruvylshikimate-3-phosphate (EPSP) to yield chorismate, which is the branch point compound that serves as the starting substrate for the three terminal pathways of aromatic amino acid biosynthesis. This reaction introduces a second double bond into the aromatic ring system. This Thermobifida fusca (strain YX) protein is Chorismate synthase.